The sequence spans 264 residues: Glutamate racemase (264 aa).

Substrate is bound by residues 10-11 and 42-43; these read DS and YG. Cysteine 73 serves as the catalytic Proton donor/acceptor. 74-75 is a substrate binding site; it reads NT. Cysteine 183 acts as the Proton donor/acceptor in catalysis. Residue 184–185 coordinates substrate; the sequence is TH.

The protein belongs to the aspartate/glutamate racemases family.

The catalysed reaction is L-glutamate = D-glutamate. The protein operates within cell wall biogenesis; peptidoglycan biosynthesis. Functionally, provides the (R)-glutamate required for cell wall biosynthesis. This chain is Glutamate racemase, found in Streptococcus pneumoniae (strain ATCC BAA-255 / R6).